A 537-amino-acid polypeptide reads, in one-letter code: Hexahomomethionine N-hydroxylase (537 aa).

A helical membrane pass occupies residues 7–27 (FNTCFQILLGFIVFIASITLL).

The protein belongs to the cytochrome P450 family. Heme is required as a cofactor. As to expression, highly expressed in hypocotyl and roots. Lower expression in siliques, stems and leaves. Barely detectable in flowers. Expressed only in the vascular bundles in apical plant parts.

It localises to the endoplasmic reticulum membrane. The enzyme catalyses L-hexahomomethionine + 2 reduced [NADPH--hemoprotein reductase] + 2 O2 = (E)-9-(methylsulfanyl)nonanal oxime + 2 oxidized [NADPH--hemoprotein reductase] + CO2 + 3 H2O + 2 H(+). It carries out the reaction L-pentahomomethionine + 2 reduced [NADPH--hemoprotein reductase] + 2 O2 = (E)-8-(methylsulfanyl)octanal oxime + 2 oxidized [NADPH--hemoprotein reductase] + CO2 + 3 H2O + 2 H(+). It catalyses the reaction an L-polyhomomethionine + 2 reduced [NADPH--hemoprotein reductase] + 2 O2 = an (E)-omega-(methylsulfanyl)-alkanal oxime + 2 oxidized [NADPH--hemoprotein reductase] + CO2 + 3 H2O + 2 H(+). Functionally, catalyzes the conversion of the long chain elongated methionines penta- and hexahomomethionine to their corresponding aldoximes 8-methylthiooctanaldoxime and 9-methylthiononanaldoxime. This chain is Hexahomomethionine N-hydroxylase (CYP79F2), found in Arabidopsis thaliana (Mouse-ear cress).